Consider the following 511-residue polypeptide: MARMGISKGGSGKEAKKPPLLLGRFEVGKLLGQGNFAKVYHARNVATGEEVAIKVMEKEKIFKSGLTAHIKREIAVLRRVRHPHIVQLYEVMATKLRIYFVMEYVRGGELFARVARGRLPEADARRYFQQLVSAVAFCHARGVFHRDIKPENLLVDDAGDLKVSDFGLSAVADGMRRDGLFHTFCGTPAYVAPEVLSRRGYDAAGADLWSCGVVLFVLMAGYLPFQDRNLAGMYRKIHKGDFRCPKWFSPELIRLLRGVLVTNPQRRATAEGIMENEWFKIGFRRFSFRVEDDRTFTCFELDDDAAVDAPTSPPDTPRTVDSGDVGAAPTRPRKAGSLTSCDSAPSLLEGRFGLGGSSRRRSSLNAFDIISFSPGFDLSGLFDQDDGGGAGAGSIPEQQKHTARFVSAAPVEVIVATLEAAAAAAGMAVREREDGSISMEGTREGEHGALAVAAEIYELTPELVVVEVRRKAGGAAEYEEFFRARLKPSLRELVCDDRPCPEDSGELSRSL.

The Protein kinase domain maps to Phe25–Phe279. ATP-binding positions include Leu31 to Val39 and Lys54. Asp147 functions as the Proton acceptor in the catalytic mechanism. Residues Asp165–Glu194 form an activation loop region. Residues Val307–Ser340 form a disordered region. The NAF domain maps to Asp321–Asp383. The PPI stretch occupies residues Lys400–Val429.

Belongs to the protein kinase superfamily. CAMK Ser/Thr protein kinase family. SNF1 subfamily. The cofactor is Mn(2+).

The enzyme catalyses L-seryl-[protein] + ATP = O-phospho-L-seryl-[protein] + ADP + H(+). It catalyses the reaction L-threonyl-[protein] + ATP = O-phospho-L-threonyl-[protein] + ADP + H(+). Its function is as follows. CIPK serine-threonine protein kinases interact with CBL proteins. Binding of a CBL protein to the regulatory NAF domain of CIPK protein lead to the activation of the kinase in a calcium-dependent manner. The protein is Putative CBL-interacting protein kinase 13 (CIPK13) of Oryza sativa subsp. japonica (Rice).